The sequence spans 701 residues: 2-isopropylmalate synthase (701 aa).

Residues 1–40 are disordered; the sequence is MTTSESPDAYTESFGAHTIVKPAGPPRVGQPSWNPQRASS. The segment covering 31–40 has biased composition (polar residues); that stretch reads PSWNPQRASS. The Pyruvate carboxyltransferase domain maps to 72–346; sequence PLWCAVDLRD…DPQIDFSNID (275 aa). 4 residues coordinate Mg(2+): Asp-81, His-285, His-287, and Asn-321. The regulatory domain stretch occupies residues 491–701; it reads PVRPLERIRQ…VVSAVNRAAR (211 aa). A VNTR1 repeat occupies 575–593; it reads VTIASPAQPGEAGRHASDP. The tract at residues 581-670 is disordered; sequence AQPGEAGRHA…EAGRHASDPV (90 aa). Residues 594-612 form a VNTR2 repeat; that stretch reads VTIASPAQPGEAGRHASDP. The stretch at 613–631 is one VNTR3 repeat; sequence VTIASPAQPGEAGRHASDP. The stretch at 632 to 650 is one VNTR4 repeat; the sequence is VTIASPAQPGEAGRHASDP. Residues 651–669 form a VNTR5 repeat; sequence VTIASPAQPGEAGRHASDP.

The protein belongs to the alpha-IPM synthase/homocitrate synthase family. LeuA type 2 subfamily. In terms of assembly, homodimer. Mg(2+) serves as cofactor.

Its subcellular location is the cytoplasm. The catalysed reaction is 3-methyl-2-oxobutanoate + acetyl-CoA + H2O = (2S)-2-isopropylmalate + CoA + H(+). It functions in the pathway amino-acid biosynthesis; L-leucine biosynthesis; L-leucine from 3-methyl-2-oxobutanoate: step 1/4. Its function is as follows. Catalyzes the condensation of the acetyl group of acetyl-CoA with 3-methyl-2-oxobutanoate (2-ketoisovalerate) to form 3-carboxy-3-hydroxy-4-methylpentanoate (2-isopropylmalate). This is 2-isopropylmalate synthase from Mycobacterium bovis (strain ATCC BAA-935 / AF2122/97).